We begin with the raw amino-acid sequence, 306 residues long: Agmatinase (306 aa).

H126, D149, H151, D153, D230, and D232 together coordinate Mn(2+).

It belongs to the arginase family. Agmatinase subfamily. Mn(2+) serves as cofactor.

It carries out the reaction agmatine + H2O = urea + putrescine. The protein operates within amine and polyamine biosynthesis; putrescine biosynthesis via agmatine pathway; putrescine from agmatine: step 1/1. Functionally, catalyzes the formation of putrescine from agmatine. This is Agmatinase from Shigella boydii serotype 18 (strain CDC 3083-94 / BS512).